Here is a 517-residue protein sequence, read N- to C-terminus: Serine hydroxymethyltransferase 2, mitochondrial (517 aa).

A mitochondrion-targeting transit peptide spans methionine 1–methionine 29. Serine 82 contacts L-serine. Residues serine 82, tyrosine 102, glutamate 104, tyrosine 112, serine 148–serine 150, and histidine 177 each bind pemetrexed. The L-serine site is built by glutamate 104 and tyrosine 112. Glutamate 104 serves as a coordination point for methotrexate. Residue threonine 184 to threonine 186 coordinates methotrexate. Residues serine 232 and histidine 260 each contribute to the pemetrexed site. The L-serine site is built by histidine 260 and lysine 286. Lysine 286 is modified (N6-(pyridoxal phosphate)lysine). Glycine 331 contacts pemetrexed. Lysine 414 lines the methotrexate pocket. Arginine 430 is an L-serine binding site. Arginine 430 contacts pemetrexed.

This sequence belongs to the SHMT family. In terms of assembly, homotetramer. Pyridoxal 5'-phosphate serves as cofactor. Ubiquitous. Mainly expressed in the shoot apical meristem and roots. Also detected in the leaf vasculature, especially in the protoxylem and adjacent cell layers.

The protein resides in the mitochondrion. It carries out the reaction (6R)-5,10-methylene-5,6,7,8-tetrahydrofolate + glycine + H2O = (6S)-5,6,7,8-tetrahydrofolate + L-serine. It functions in the pathway one-carbon metabolism; tetrahydrofolate interconversion. Its activity is regulated as follows. Inhibited by the antifolate drugs methotrexate and pemetrexed. Functions outside the photorespiratory pathway in catalyzing the interconversion of serine and glycine with the conversion of tetrahydrofolate (THF) into 5,10-methylene-THF. In Arabidopsis thaliana (Mouse-ear cress), this protein is Serine hydroxymethyltransferase 2, mitochondrial.